Here is a 141-residue protein sequence, read N- to C-terminus: ATP synthase epsilon chain (141 aa).

This sequence belongs to the ATPase epsilon chain family. In terms of assembly, F-type ATPases have 2 components, CF(1) - the catalytic core - and CF(0) - the membrane proton channel. CF(1) has five subunits: alpha(3), beta(3), gamma(1), delta(1), epsilon(1). CF(0) has three main subunits: a, b and c.

The protein resides in the cell membrane. Functionally, produces ATP from ADP in the presence of a proton gradient across the membrane. The sequence is that of ATP synthase epsilon chain from Lactococcus lactis subsp. cremoris (strain SK11).